The sequence spans 157 residues: MAGTNPRAARIAALIQRVVASSIERELHDKRLASITVTEVRVTNDLQIAKVYWTQLGHEGHEEGERKRAQQALDQAKGHLRSLVGHKAGLRLTPQLQFVFDEVPGEAHEIEDILAVAKKRDEELARARATAQYAGDADPYKHDDEPSDDFEDDSDEE.

Residues 126 to 157 (RARATAQYAGDADPYKHDDEPSDDFEDDSDEE) are disordered. A compositionally biased stretch (acidic residues) spans 145 to 157 (EPSDDFEDDSDEE).

It belongs to the RbfA family. As to quaternary structure, monomer. Binds 30S ribosomal subunits, but not 50S ribosomal subunits or 70S ribosomes.

The protein localises to the cytoplasm. One of several proteins that assist in the late maturation steps of the functional core of the 30S ribosomal subunit. Associates with free 30S ribosomal subunits (but not with 30S subunits that are part of 70S ribosomes or polysomes). Required for efficient processing of 16S rRNA. May interact with the 5'-terminal helix region of 16S rRNA. The sequence is that of Ribosome-binding factor A from Bifidobacterium longum (strain DJO10A).